The following is a 248-amino-acid chain: MAGHSKWANIKHRKERQDAKKGKIFTKLIRELTVAAKQGGGVPADNPRLRLAVDKALTANMTRDTIDRAIARGVGSNDADNMVELSYEGYAPSGVAIIVEAMTDNRNRTAAEVRHAFSKCGGNLGTDGSVAYMFERKGQISFAPGVDEEALMDAALEAGADDVVVNDDGSIDVFTTFADFISVNEALTAAGFKGDEAEVTMIPSTTATLDLETAQKVLKLIDMLEDLDDVQNVYSNADIPDDVMAQLG.

This sequence belongs to the TACO1 family.

It is found in the cytoplasm. The chain is Probable transcriptional regulatory protein PSPA7_4544 from Pseudomonas paraeruginosa (strain DSM 24068 / PA7) (Pseudomonas aeruginosa (strain PA7)).